The sequence spans 167 residues: Phosphopantetheine adenylyltransferase (167 aa).

T13 provides a ligand contact to substrate. Residues 13 to 14 and H21 each bind ATP; that span reads TF. Residues K45, L78, and R92 each coordinate substrate. ATP-binding positions include 93-95, E103, and 128-134; these read GLR and TQFISSS.

This sequence belongs to the bacterial CoaD family. In terms of assembly, homohexamer. Requires Mg(2+) as cofactor.

It is found in the cytoplasm. It catalyses the reaction (R)-4'-phosphopantetheine + ATP + H(+) = 3'-dephospho-CoA + diphosphate. It participates in cofactor biosynthesis; coenzyme A biosynthesis; CoA from (R)-pantothenate: step 4/5. In terms of biological role, reversibly transfers an adenylyl group from ATP to 4'-phosphopantetheine, yielding dephospho-CoA (dPCoA) and pyrophosphate. The polypeptide is Phosphopantetheine adenylyltransferase (Wolbachia sp. subsp. Brugia malayi (strain TRS)).